Here is a 272-residue protein sequence, read N- to C-terminus: Glycosylphosphatidylinositol anchor biosynthesis protein 11 (272 aa).

The segment covering 21–31 (QSTSTTKSTPG) has biased composition (polar residues). The segment at 21–48 (QSTSTTKSTPGSQATESSTTTAGSSSSL) is disordered. The span at 32-48 (SQATESSTTTAGSSSSL) shows a compositional bias: low complexity. 5 helical membrane-spanning segments follow: residues 91-111 (VMLNALPVVAAFQMTYALLCL), 145-165 (LLASVLTSIVTPFLYFAMVLF), 177-197 (FLCAAHLALLTLFPLFYVHGV), 215-235 (TFGGLVGGIVGAWLGAVPIPL), and 248-268 (ILCGAYGGYLLGRVLGGTLFW).

Belongs to the PIGF family.

It is found in the endoplasmic reticulum membrane. The protein operates within glycolipid biosynthesis; glycosylphosphatidylinositol-anchor biosynthesis. Its function is as follows. Acts in the GPI biosynthetic pathway between GlcNAc-PI synthesis and GPI transfer to protein. The chain is Glycosylphosphatidylinositol anchor biosynthesis protein 11 (gpi-11) from Neurospora crassa (strain ATCC 24698 / 74-OR23-1A / CBS 708.71 / DSM 1257 / FGSC 987).